A 318-amino-acid polypeptide reads, in one-letter code: Aspartate carbamoyltransferase catalytic subunit (318 aa).

Positions 64 and 65 each coordinate carbamoyl phosphate. Residue Lys92 participates in L-aspartate binding. 3 residues coordinate carbamoyl phosphate: Arg114, His142, and Gln145. L-aspartate contacts are provided by Arg176 and Arg230. Positions 271 and 272 each coordinate carbamoyl phosphate.

This sequence belongs to the aspartate/ornithine carbamoyltransferase superfamily. ATCase family. As to quaternary structure, heterododecamer (2C3:3R2) of six catalytic PyrB chains organized as two trimers (C3), and six regulatory PyrI chains organized as three dimers (R2).

It catalyses the reaction carbamoyl phosphate + L-aspartate = N-carbamoyl-L-aspartate + phosphate + H(+). It participates in pyrimidine metabolism; UMP biosynthesis via de novo pathway; (S)-dihydroorotate from bicarbonate: step 2/3. In terms of biological role, catalyzes the condensation of carbamoyl phosphate and aspartate to form carbamoyl aspartate and inorganic phosphate, the committed step in the de novo pyrimidine nucleotide biosynthesis pathway. The sequence is that of Aspartate carbamoyltransferase catalytic subunit from Desulfovibrio desulfuricans (strain ATCC 27774 / DSM 6949 / MB).